The primary structure comprises 342 residues: tRNA dimethylallyltransferase (342 aa).

Positions 1 to 13 (MNDTTAKTLNCSP) are enriched in polar residues. Residues 1 to 21 (MNDTTAKTLNCSPASRDGFPE) are disordered. Residue 40 to 47 (GPTGVGKT) coordinates ATP. Substrate is bound at residue 42–47 (TGVGKT). 2 interaction with substrate tRNA regions span residues 65–68 (DSMQ) and 189–193 (QRILR).

This sequence belongs to the IPP transferase family. Monomer. Requires Mg(2+) as cofactor.

It carries out the reaction adenosine(37) in tRNA + dimethylallyl diphosphate = N(6)-dimethylallyladenosine(37) in tRNA + diphosphate. Its function is as follows. Catalyzes the transfer of a dimethylallyl group onto the adenine at position 37 in tRNAs that read codons beginning with uridine, leading to the formation of N6-(dimethylallyl)adenosine (i(6)A). The polypeptide is tRNA dimethylallyltransferase (Syntrophobacter fumaroxidans (strain DSM 10017 / MPOB)).